A 61-amino-acid chain; its full sequence is Large ribosomal subunit protein uL30 (61 aa).

The protein belongs to the universal ribosomal protein uL30 family. As to quaternary structure, part of the 50S ribosomal subunit.

The chain is Large ribosomal subunit protein uL30 from Corynebacterium glutamicum (strain ATCC 13032 / DSM 20300 / JCM 1318 / BCRC 11384 / CCUG 27702 / LMG 3730 / NBRC 12168 / NCIMB 10025 / NRRL B-2784 / 534).